The primary structure comprises 101 residues: Small ribosomal subunit protein uS14 (101 aa).

The segment at 33-69 is disordered; it reads SQDASYEEKIDASTKLQKLPRDSSPSRHRNRCELSGR. Positions 51 to 68 are enriched in basic and acidic residues; that stretch reads LPRDSSPSRHRNRCELSG.

Belongs to the universal ribosomal protein uS14 family. As to quaternary structure, part of the 30S ribosomal subunit. Contacts proteins S3 and S10.

In terms of biological role, binds 16S rRNA, required for the assembly of 30S particles and may also be responsible for determining the conformation of the 16S rRNA at the A site. The protein is Small ribosomal subunit protein uS14 of Xanthomonas axonopodis pv. citri (strain 306).